The sequence spans 214 residues: Refilin-B (214 aa).

The segment at 1–56 (MVGRLSLQDVPELVDAKKKGDGVLDSPDSGLPPSPSPSHWGLAAGGGGGERAAAPG) is disordered. A phosphoserine mark is found at S6 and S26.

This sequence belongs to the Refilin family. In terms of assembly, interacts with FLNA and FLNB.

The protein localises to the cytoplasm. It localises to the cytoskeleton. Functionally, involved in the regulation of the perinuclear actin network and nuclear shape through interaction with filamins. Plays an essential role in the formation of cartilaginous skeletal elements. The protein is Refilin-B of Homo sapiens (Human).